The sequence spans 172 residues: C-phycocyanin beta chain (172 aa).

(2R,3E)-phycocyanobilin-binding positions include Asn35, Asp39, Asn72, Arg77, Cys82, 82 to 88 (CLRDMEI), 149 to 151 (TIG), and Cys153. Asn72 carries the N4-methylasparagine modification.

Belongs to the phycobiliprotein family. In terms of assembly, heterodimer of an alpha and a beta subunit, which further assembles into trimers and the trimers into hexamers. The basic functional unit of phycobiliproteins is a ring-shaped hexamer formed from two back-to-back trimers contacting via the alpha chain subunits. The trimers are composed of alpha/beta subunit heterodimers arranged around a three-fold axis of symmetry. The phycoerythrins also contain a gamma subunit which is located in the center of the hexamer. Contains two covalently linked phycocyanobilin chromophores.

Its subcellular location is the plastid. It localises to the chloroplast thylakoid membrane. In terms of biological role, light-harvesting photosynthetic tetrapyrrole chromophore-protein from the phycobiliprotein complex (phycobilisome, PBS). Phycocyanin is the major phycobiliprotein in the PBS rod. This is C-phycocyanin beta chain (cpcB) from Cyanidium caldarium (Red alga).